Consider the following 31-residue polypeptide: Photosystem I reaction center subunit XII (31 aa).

Residues 7–26 form a helical membrane-spanning segment; the sequence is QISIILLIALIPAFFSLKLG.

The protein belongs to the PsaM family.

It localises to the plastid. The protein resides in the chloroplast thylakoid membrane. The protein is Photosystem I reaction center subunit XII of Euglena myxocylindracea.